The primary structure comprises 566 residues: Phenylalanine--tRNA ligase beta subunit (566 aa).

A B5 domain is found at 287 to 362 (YFQEEVEFNV…IGEGLSSFNP (76 aa)). Mg(2+) is bound by residues aspartate 340, aspartate 346, glutamate 349, and aspartate 350.

Belongs to the phenylalanyl-tRNA synthetase beta subunit family. Type 2 subfamily. In terms of assembly, tetramer of two alpha and two beta subunits. Mg(2+) is required as a cofactor.

It is found in the cytoplasm. It catalyses the reaction tRNA(Phe) + L-phenylalanine + ATP = L-phenylalanyl-tRNA(Phe) + AMP + diphosphate + H(+). The protein is Phenylalanine--tRNA ligase beta subunit of Borreliella burgdorferi (strain ZS7) (Borrelia burgdorferi).